Here is a 257-residue protein sequence, read N- to C-terminus: Glutamate racemase (257 aa).

Substrate contacts are provided by residues 12 to 13 and 44 to 45; these read DS and YG. Catalysis depends on Cys-75, which acts as the Proton donor/acceptor. 76 to 77 contributes to the substrate binding site; sequence NT. Residue Cys-185 is the Proton donor/acceptor of the active site. Position 186–187 (186–187) interacts with substrate; it reads TH.

The protein belongs to the aspartate/glutamate racemases family.

The enzyme catalyses L-glutamate = D-glutamate. Its pathway is cell wall biogenesis; peptidoglycan biosynthesis. Functionally, provides the (R)-glutamate required for cell wall biosynthesis. The polypeptide is Glutamate racemase (Clostridium botulinum (strain Loch Maree / Type A3)).